The sequence spans 297 residues: Formamidopyrimidine-DNA glycosylase (297 aa).

The Schiff-base intermediate with DNA role is filled by proline 2. The active-site Proton donor is glutamate 3. Catalysis depends on lysine 58, which acts as the Proton donor; for beta-elimination activity. DNA-binding residues include histidine 106, arginine 133, and arginine 178. The segment at 263–297 adopts an FPG-type zinc-finger fold; it reads FVYDRAGEPCRICGTPIRQILQGQRSTFYCPHCQH. Arginine 287 functions as the Proton donor; for delta-elimination activity in the catalytic mechanism.

It belongs to the FPG family. In terms of assembly, monomer. Zn(2+) is required as a cofactor.

It catalyses the reaction Hydrolysis of DNA containing ring-opened 7-methylguanine residues, releasing 2,6-diamino-4-hydroxy-5-(N-methyl)formamidopyrimidine.. It carries out the reaction 2'-deoxyribonucleotide-(2'-deoxyribose 5'-phosphate)-2'-deoxyribonucleotide-DNA = a 3'-end 2'-deoxyribonucleotide-(2,3-dehydro-2,3-deoxyribose 5'-phosphate)-DNA + a 5'-end 5'-phospho-2'-deoxyribonucleoside-DNA + H(+). Involved in base excision repair of DNA damaged by oxidation or by mutagenic agents. Acts as a DNA glycosylase that recognizes and removes damaged bases. Has a preference for oxidized purines, such as 7,8-dihydro-8-oxoguanine (8-oxoG). Has AP (apurinic/apyrimidinic) lyase activity and introduces nicks in the DNA strand. Cleaves the DNA backbone by beta-delta elimination to generate a single-strand break at the site of the removed base with both 3'- and 5'-phosphates. This chain is Formamidopyrimidine-DNA glycosylase, found in Cupriavidus metallidurans (strain ATCC 43123 / DSM 2839 / NBRC 102507 / CH34) (Ralstonia metallidurans).